The sequence spans 238 residues: Pyridoxine 5'-phosphate synthase (238 aa).

3-amino-2-oxopropyl phosphate is bound by residues Asn7 and Arg18. Catalysis depends on His43, which acts as the Proton acceptor. 1-deoxy-D-xylulose 5-phosphate is bound by residues Arg45 and His50. Glu70 acts as the Proton acceptor in catalysis. Thr100 contacts 1-deoxy-D-xylulose 5-phosphate. His190 acts as the Proton donor in catalysis. 3-amino-2-oxopropyl phosphate contacts are provided by residues Asp191 and 213 to 214; that span reads GH.

It belongs to the PNP synthase family. Homooctamer; tetramer of dimers.

Its subcellular location is the cytoplasm. It carries out the reaction 3-amino-2-oxopropyl phosphate + 1-deoxy-D-xylulose 5-phosphate = pyridoxine 5'-phosphate + phosphate + 2 H2O + H(+). The protein operates within cofactor biosynthesis; pyridoxine 5'-phosphate biosynthesis; pyridoxine 5'-phosphate from D-erythrose 4-phosphate: step 5/5. Its function is as follows. Catalyzes the complicated ring closure reaction between the two acyclic compounds 1-deoxy-D-xylulose-5-phosphate (DXP) and 3-amino-2-oxopropyl phosphate (1-amino-acetone-3-phosphate or AAP) to form pyridoxine 5'-phosphate (PNP) and inorganic phosphate. In Cytophaga hutchinsonii (strain ATCC 33406 / DSM 1761 / CIP 103989 / NBRC 15051 / NCIMB 9469 / D465), this protein is Pyridoxine 5'-phosphate synthase.